A 223-amino-acid polypeptide reads, in one-letter code: MVMAEGTAVLRRNRPGTKAQDFYNWPDESFEEMDSTLAVQQYIQQNIRADCSNIDKILEPPEGQDEGVWKYEHLRQFCLELNGLAVKLQSECHPDTCTQMTATEQWIFLCAAHKTPKECPAIDYTRHTLDGAACLLNSNKYFPSRVSIKESSVAKLGSVCRRIYRIFSHAYFHHRQIFDEYENETFLCHRFTKFVMKYNLMSKDNLIVPILEEEVQNSVSGGE.

8 residues coordinate Zn(2+): Cys-92, Cys-97, Cys-110, His-113, Cys-119, His-127, His-169, and His-174.

Belongs to the MOB1/phocein family. Part of the core of STRIPAK complexes composed of PP2A catalytic and scaffolding subunits, the striatins (PP2A regulatory subunits), the striatin-associated proteins MOB4, STRIP1 and STRIP2, PDCD10 and members of the STE20 kinases, such as STK24 and STK26.

Its subcellular location is the cytoplasm. It localises to the membrane. It is found in the golgi apparatus. The protein localises to the golgi stack membrane. Part of the striatin-interacting phosphatase and kinase (STRIPAK) complexes. STRIPAK complexes have critical roles in protein (de)phosphorylation and are regulators of multiple signaling pathways including Hippo, MAPK, nuclear receptor and cytoskeleton remodeling. Different types of STRIPAK complexes are involved in a variety of biological processes such as cell growth, differentiation, apoptosis, metabolism and immune regulation. The polypeptide is MOB-like protein phocein (MOB4) (Gallus gallus (Chicken)).